A 390-amino-acid polypeptide reads, in one-letter code: Telobox protein 1 (390 aa).

The interval 30-57 (ENPSKREVAQDVPGFERKPTKVRKPRVK) is disordered. Residues 32–48 (PSKREVAQDVPGFERKP) are compositionally biased toward basic and acidic residues. HTH myb-type domains lie at 50–109 (KVRK…PEDY) and 135–193 (STRK…PERY). A DNA-binding region (H-T-H motif) is located at residues 78 to 105 (WKKILLDERFHFTNRSPNDLKDRFRTIL). Residues 115–143 (NAKTHMGRPQKIPHTVGLSKSTRKERKQF) are disordered. The segment at residues 162–189 (WTRISKDANLGLQNRRSTDLRDRFRNAF) is a DNA-binding region (H-T-H motif). 2 stretches are compositionally biased toward polar residues: residues 244 to 257 (SNPN…TEQP) and 322 to 340 (ISPS…SIQQ). Disordered stretches follow at residues 244–278 (SNPN…FTSQ) and 316–390 (QPPS…DNRG). Over residues 347–360 (PPLSSNTLNSSTLP) the composition is skewed to low complexity.

The protein localises to the nucleus. In terms of biological role, general transcription factor with prominent roles in controlling histone levels and stability. Binds and regulates the activities of many promoters, including those controlling the expression of all four types of canonical histones. Is also involved in the centromeric loading of cnp1 and maintenance of centromere identity. Moreover, regulates the expression of cdc2, a protease capable of histone clipping. This Schizosaccharomyces pombe (strain 972 / ATCC 24843) (Fission yeast) protein is Telobox protein 1.